The chain runs to 295 residues: Biliverdin reductase A (295 aa).

The propeptide occupies M1–S2. NAD(+) is bound by residues R18–A19, S76–H79, and Y97. S154 is modified (phosphoserine). An NAD(+)-binding site is contributed by S167. T173 bears the Phosphothreonine mark. Residues S177 and S229 each carry the phosphoserine modification. 2 positions are modified to N6-acetyllysine: K247 and K252. Positions 279, 280, 291, and 292 each coordinate Zn(2+).

Belongs to the Gfo/Idh/MocA family. Biliverdin reductase subfamily. Monomer. Zn(2+) is required as a cofactor.

It localises to the cytoplasm. The protein localises to the cytosol. It carries out the reaction (4Z,15Z)-bilirubin IXalpha + NAD(+) = biliverdin IXalpha + NADH + H(+). The catalysed reaction is (4Z,15Z)-bilirubin IXalpha + NADP(+) = biliverdin IXalpha + NADPH + H(+). It participates in porphyrin-containing compound metabolism; protoheme degradation. Its function is as follows. Reduces the gamma-methene bridge of the open tetrapyrrole, biliverdin IXalpha, to bilirubin with the concomitant oxidation of a NADH or NADPH cofactor. Does not reduce bilirubin IXbeta. Uses the reactants NADH or NADPH depending on the pH; NADH is used at the acidic pH range (6-6.9) and NADPH at the alkaline range (8.5-8.7). NADPH, however, is the probable reactant in biological systems. The chain is Biliverdin reductase A from Mus musculus (Mouse).